We begin with the raw amino-acid sequence, 333 residues long: SPbeta prophage-derived recombinase-like protein YomM (333 aa).

A Core-binding (CB) domain is found at Glu-30–Glu-113. The 191-residue stretch at Tyr-142 to Phe-332 folds into the Tyr recombinase domain. Residues Arg-180, Lys-211, His-281, and His-308 contribute to the active site. Tyr-319 functions as the O-(3'-phospho-DNA)-tyrosine intermediate in the catalytic mechanism.

The protein belongs to the 'phage' integrase family.

This is SPbeta prophage-derived recombinase-like protein YomM (yomM) from Bacillus subtilis (strain 168).